Here is a 545-residue protein sequence, read N- to C-terminus: Ubiquitin carboxyl-terminal hydrolase 17-like protein D (545 aa).

In terms of domain architecture, USP spans 51 to 348 (CGLQNTGNSC…NAYVLFYVQQ (298 aa)). The active-site Nucleophile is C60. H307 acts as the Proton acceptor in catalysis. Disordered stretches follow at residues 367–443 (LDPE…KLGQ) and 521–545 (RQEG…LLVR). Positions 374–385 (KKSRRKKHKKKS) are enriched in basic residues. The span at 393-404 (EPSKNREKKATK) shows a compositional bias: basic and acidic residues. The segment covering 524–537 (GRRRSKKGKNKNKQ) has biased composition (basic residues).

It belongs to the peptidase C19 family. USP17 subfamily. Detected in T-cell, myeloid, and embryonic stem cell lines.

The protein localises to the nucleus. It is found in the endoplasmic reticulum. The catalysed reaction is Thiol-dependent hydrolysis of ester, thioester, amide, peptide and isopeptide bonds formed by the C-terminal Gly of ubiquitin (a 76-residue protein attached to proteins as an intracellular targeting signal).. Its function is as follows. Deubiquitinating enzyme that removes conjugated ubiquitin from specific proteins to regulate different cellular processes that may include cell proliferation, progression through the cell cycle, apoptosis, cell migration, and the cellular response to viral infection. This chain is Ubiquitin carboxyl-terminal hydrolase 17-like protein D, found in Mus musculus (Mouse).